A 252-amino-acid polypeptide reads, in one-letter code: Sugar fermentation stimulation protein homolog (252 aa).

This sequence belongs to the SfsA family.

The chain is Sugar fermentation stimulation protein homolog from Picosynechococcus sp. (strain ATCC 27264 / PCC 7002 / PR-6) (Agmenellum quadruplicatum).